Here is a 328-residue protein sequence, read N- to C-terminus: GMP reductase (328 aa).

Cys-176 acts as the Thioimidate intermediate in catalysis. Position 205 to 228 (205 to 228 (IIADGGIRTHGDIAKSIRFGASMI)) interacts with NADP(+).

Belongs to the IMPDH/GMPR family. GuaC type 2 subfamily.

It catalyses the reaction IMP + NH4(+) + NADP(+) = GMP + NADPH + 2 H(+). Functionally, catalyzes the irreversible NADPH-dependent deamination of GMP to IMP. It functions in the conversion of nucleobase, nucleoside and nucleotide derivatives of G to A nucleotides, and in maintaining the intracellular balance of A and G nucleotides. The protein is GMP reductase of Streptococcus pneumoniae (strain JJA).